Consider the following 166-residue polypeptide: Regulator of ribonuclease activity A (166 aa).

The protein belongs to the RraA family. Homotrimer. Binds to both RNA-binding sites in the C-terminal region of Rne and to RhlB.

The protein localises to the cytoplasm. In terms of biological role, globally modulates RNA abundance by binding to RNase E (Rne) and regulating its endonucleolytic activity. Can modulate Rne action in a substrate-dependent manner by altering the composition of the degradosome. Modulates RNA-binding and helicase activities of the degradosome. In Histophilus somni (strain 2336) (Haemophilus somnus), this protein is Regulator of ribonuclease activity A.